A 424-amino-acid chain; its full sequence is Piriformospora indica-insensitive protein 2 (424 aa).

A signal peptide spans 1–21 (MLWQTFFSSLLLLSLLFGCNG). 10 LRR repeats span residues 141–166 (ASNLESLEFRSNPGLIGELPETIGNL), 167–190 (TKLKSLVVLENGFSGELPASICNL), 191–213 (KRLKRLVFAGNSFAGMIPNCFKG), 214–237 (LKELLILDLSRNSFSGTLPTSFGD), 238–263 (LVSLLKLDLSNNLLEGNLPQELGFLK), 265–286 (LTLLDLRNNRFSGGLSKNIENI), 287–311 (QSLTELVLSNNPMGEEDMVGTNWGK), 312–336 (MSNLVVLDLSKMGLRGEIPTSLTNL), 337–360 (KRLRFLGLNNNNLTGFVPSKKLEA), and 362–387 (PCLGALYINGNNLTGELRFSTKFYEK).

The protein resides in the cell membrane. In terms of biological role, required for growth promotion and enhanced seed production mediated by the endophytic fungus Piriformospora indica. The polypeptide is Piriformospora indica-insensitive protein 2 (PII-2) (Arabidopsis thaliana (Mouse-ear cress)).